The following is a 205-amino-acid chain: Retron Vc95 putative HNH endonuclease (205 aa).

Functionally, putative HNH endonuclease component of antiviral defense system retron Vc95, composed of a non-coding RNA (ncRNA), a reverse transcriptase (RT), a probable ATP-binding protein and this protein. Expression of retron Vc95 confers protection against bacteriophages T2, T4 and T6. At multiplicity of infection (MOI) of 0.02 cultures slow growth when infected with T4 but do not collapse, at MOI 2 cultures enter growth stasis. This chain is Retron Vc95 putative HNH endonuclease, found in Vibrio cholerae serotype O1 biovar El Tor.